We begin with the raw amino-acid sequence, 360 residues long: MKEIERRCLRALIGIVQNIYDQMKAGQVPELHIATRTKYNIEFNEESEVWVYGDRKSVRSAKTVKGAYRILKMTYVIGFLKEQLNLNKSSTLRELYYISEGWGAAKFEEQPESDRLVEDLEILTNFQREHFHIRPEEDGATVIGPLRVREETRRGVREIHCQDDVGEGGYQIPVNVDKIEFVDHDAKFVIAIETGGMRDRLVENGFDEKYDAIIVHLKGQPARSTRRLLRRLNTELNLPVVVFTDGDPWSYRIFASVAYGSIKSAHLSEYLATPAAQFVGIRPTDIVKYDLPADKLTEEDIKALNAILTDPRFDSEFWKKEVNLQLEINKKSEQQALAKYGLDYVTDVYLPERLSELGVI.

Positions 3–140 (EIERRCLRAL…FHIRPEEDGA (138 aa)) constitute a Topo IIA-type catalytic domain. Y97 serves as the catalytic O-(5'-phospho-DNA)-tyrosine intermediate. Mg(2+)-binding residues include E193 and D245.

The protein belongs to the TOP6A family. Homodimer. Heterotetramer of two Top6A and two Top6B chains. Mg(2+) is required as a cofactor.

The enzyme catalyses ATP-dependent breakage, passage and rejoining of double-stranded DNA.. In terms of biological role, relaxes both positive and negative superturns and exhibits a strong decatenase activity. This Archaeoglobus fulgidus (strain ATCC 49558 / DSM 4304 / JCM 9628 / NBRC 100126 / VC-16) protein is Type 2 DNA topoisomerase 6 subunit A.